A 1469-amino-acid polypeptide reads, in one-letter code: Chromosome condensation protein dpy-27 (1469 aa).

The segment at 1–25 (MQPFKRRALTSDDDRPYADTDSMPE) is disordered. A compositionally biased stretch (basic and acidic residues) spans 9 to 18 (LTSDDDRPYA). Residue 122–129 (GPNGSGKS) coordinates ATP. Positions 356 to 542 (ELEENKDIML…KGTLQTMMAE (187 aa)) form a coiled coil. The SMC hinge domain maps to 621–736 (PGFKGRLGDL…VDSLEEATRI (116 aa)). The disordered stretch occupies residues 758–781 (GALTGGGKPTTGRIRNDNNPNMSG). Coiled coils occupy residues 805–974 (LKLQ…AQLE), 1016–1056 (AYQT…DIIE), and 1159–1182 (TSAK…RMAR). Positions 1404–1469 (LPEFNRFPPA…VQRRVRRSRH (66 aa)) are disordered. A compositionally biased stretch (acidic residues) spans 1439–1449 (EEEDEEDELIE).

Belongs to the SMC family. SMC4 subfamily. Component of the dosage compensation complex, which contains the mix-1/SMC2 and dpy-27/SMC4 heterodimer, and three non SMC subunits that probably regulate the complex: dpy-26, capg-1 and dpy-28. Within the complex, interacts with dpy-28, mix-1, dpy-26 and capg-1. Interacts with dpy-21. Interacts with dpy-28; the interaction is required for dpy-28 protein stability and dpy-28 association with the X chromosome. Interacts with smcl-1.

The protein resides in the nucleus. Its subcellular location is the chromosome. Central component of the condensin I-like dosage compensation complex that associates specifically with hermaphrodite X chromosomes to reduce their gene transcription throughout development. Its strong similarity with the condensin subunit smc4 suggests that it may reduce the X-chromosome transcript level by condensing the chromatin structure during interphase. Involved in the recruitment of the dosage compensation proteins mix-1 and dpy-21 to the X chromosome. Might be involved in the reduction of histone H4 lysine 16 acetylation (H4K16ac) on dosage compensated X chromosomes. As a member of the dosage compensation complex, also binds to regulatory regions of the autosomal her-1 gene, required for male development, possibly contributing to its repression in hermaphrodites. Also plays a role in the regulation of growth and body fat metabolism downstream of the TOR complex 2 pathway. In Caenorhabditis elegans, this protein is Chromosome condensation protein dpy-27 (dpy-27).